Reading from the N-terminus, the 209-residue chain is Uracil phosphoribosyltransferase (209 aa).

Residues Arg79, Arg104, and 131 to 139 (DPMLATGGS) each bind 5-phospho-alpha-D-ribose 1-diphosphate. Uracil contacts are provided by residues Ile194 and 199–201 (GDA). Asp200 contacts 5-phospho-alpha-D-ribose 1-diphosphate.

This sequence belongs to the UPRTase family. Mg(2+) is required as a cofactor.

The catalysed reaction is UMP + diphosphate = 5-phospho-alpha-D-ribose 1-diphosphate + uracil. The protein operates within pyrimidine metabolism; UMP biosynthesis via salvage pathway; UMP from uracil: step 1/1. With respect to regulation, allosterically activated by GTP. Functionally, catalyzes the conversion of uracil and 5-phospho-alpha-D-ribose 1-diphosphate (PRPP) to UMP and diphosphate. In Streptococcus pneumoniae (strain ATCC BAA-255 / R6), this protein is Uracil phosphoribosyltransferase.